A 2435-amino-acid polypeptide reads, in one-letter code: Highly reducing polyketide synthase ATR6 (2435 aa).

The Ketosynthase family 3 (KS3) domain maps to 18-450 (AEPIAIVSAA…GSNAHVVLDN (433 aa)). Residues cysteine 192, histidine 331, and histidine 371 each act as for beta-ketoacyl synthase activity in the active site. The malonyl-CoA:ACP transacylase (MAT) domain stretch occupies residues 586 to 883 (FVFTGQGAQW…EIGPSAALGG (298 aa)). Serine 682 acts as the For malonyltransferase activity in catalysis. The N-terminal hotdog fold stretch occupies residues 979-1125 (HDLLGGKVLG…GLVRLALNAS (147 aa)). The interval 979–1291 (HDLLGGKVLG…LRGISMTSVG (313 aa)) is dehydratase (DH) domain. The 318-residue stretch at 979-1296 (HDLLGGKVLG…MTSVGLQGNV (318 aa)) folds into the PKS/mFAS DH domain. The active-site For beta-hydroxyacyl dehydratase activity is histidine 1011. The tract at residues 1141 to 1296 (QYPTPARFWY…MTSVGLQGNV (156 aa)) is C-terminal hotdog fold. The tract at residues 1724 to 2037 (GILDTLHFAE…DHNRLRNVVI (314 aa)) is enoylreductase (ER) domain. The interval 2062–2301 (PEQTYLLVGK…ITGIAVPQPG (240 aa)) is catalytic ketoreductase (KRc) domain. The 77-residue stretch at 2353–2429 (VLLSSAVGVL…VLCQKIISRM (77 aa)) folds into the Carrier domain. Serine 2389 carries the O-(pantetheine 4'-phosphoryl)serine modification.

It participates in mycotoxin biosynthesis. Highly reducing polyketide synthase; part of the core atranone cluster (CAC) which products are predicted to catalyze most or all steps of mycotoxin atranone synthesis, starting from geranylgeranyl pyrophosphate (GGPP). The initial cyclization of GGPP to dolabellane is probably performed by the terpene cyclase ATR13. The Baeyer-Villiger oxidation near the end of the atranone synthesis, which converts atranones D and E to atranones F and G is predicted to be catalyzed by the monooxygenase ATR8. Of the CAC's other predicted gene products, the reducing PKS ATR6 might synthesize a polyketide chain. This polyketide is probably transferred onto the atranone backbone by the polyketide transferase ATR5. Other predicted CAC products include 4 oxygenases (ATR2, ATR3, ATR4, and ATR14), 3 short-chain reductases (ATR7, ATR9, and ATR10), and a methyltransferase (ATR12). These may all be involved in the various steps of atranone biosynthesis, although their specific roles must await experimental determination. This Stachybotrys chlorohalonatus (strain IBT 40285) protein is Highly reducing polyketide synthase ATR6.